We begin with the raw amino-acid sequence, 894 residues long: MARQKKMGQNVLRAVFFLVLGLLGHSHGGFPNTISIGGLFMRNTVQEHSAFRFAVQLYNTNQNTTEKPFHLNYHVDHLDSSNSFSVTNAFCSQFSRGVYAIFGFYDQMSMNTLTSFCGALHTSFVTPSFPTDADVQFVIQMRPALKGAILSLLGHYKWEKFVYLYDTERGFSILQAIMEAAVQNNWQVTARSVGNIKDVQEFRRIIEEMDRRQEKRYLIDCEVERINTILEQVVILGKHSRGYHYMLANLGFTDILLERVMHGGANITGFQIVNNENPMVQQFIQRWVRLDEREFPEAKNAPLKYTSALTHDAILVIAEAFRYLRRQRVDVSRRGSAGDCLANPAVPWSQGIDIERALKMVQVQGMTGNIQFDTYGRRTNYTIDVYEMKVSGSRKAGYWNEYERFVPFSDQQISNDSASSENRTIVVTTILESPYVMYKKNHEQLEGNERYEGYCVDLAYEIAKHVRIKYKLSIVGDGKYGARDPETKIWNGMVGELVYGRADIAVAPLTITLVREEVIDFSKPFMSLGISIMIKKPQKSKPGVFSFLDPLAYEIWMCIVFASIGVSVVLFLVSRFSPYEWHLEDNNEEPRDPQSPPDPPNEFGIFNSLWFSLGAFMQQGCDISPRSLSGRIVGGVWWFFTLIIISSYTANLAAFLTVERMVSPIESAEDLAKQTEIAYGTLDSGSTKEFFRRSKIAVYEKMWSYMKSAEPSVFTKTTADGVARVRKSKGKFAFLLESTMNEYIEQRKPCDTMKVGGNLDSKGYGVATPKGSALGNAVNLAVLKLNEQGLLDKLKNKWWYDKGECGTGGCGSKDKTSALSLSNVAGVFYILVGGLGLAMMVALIEFCYKSRAESKRMKLTKNTQNFKPAPATNTQNYATYREGYNVYGTESVKI.

Residues 1–28 form the signal peptide; the sequence is MARQKKMGQNVLRAVFFLVLGLLGHSHG. Over 29-552 the chain is Extracellular; sequence GFPNTISIGG…GVFSFLDPLA (524 aa). Residues asparagine 63, asparagine 266, asparagine 380, asparagine 415, and asparagine 422 are each glycosylated (N-linked (GlcNAc...) asparagine). Residues cysteine 91 and cysteine 340 are joined by a disulfide bond. L-glutamate is bound by residues proline 508, threonine 510, and arginine 515. Residues 553–573 form a helical membrane-spanning segment; the sequence is YEIWMCIVFASIGVSVVLFLV. Residues 574-602 are Cytoplasmic-facing; the sequence is SRFSPYEWHLEDNNEEPRDPQSPPDPPNE. Residues 603-618 constitute an intramembrane region (helical; Pore-forming); it reads FGIFNSLWFSLGAFMQ. The stretch at 619–621 is an intramembrane region; the sequence is QGC. Cysteine 621 is lipidated: S-palmitoyl cysteine. Residues 622 to 627 lie on the Cytoplasmic side of the membrane; sequence DISPRS. The chain crosses the membrane as a helical span at residues 628–648; it reads LSGRIVGGVWWFFTLIIISSY. Over 649–823 the chain is Extracellular; sequence TANLAAFLTV…DKTSALSLSN (175 aa). Serine 686, threonine 687, and glutamate 737 together coordinate L-glutamate. A disulfide bond links cysteine 750 and cysteine 805. The helical transmembrane segment at 824 to 844 threads the bilayer; the sequence is VAGVFYILVGGLGLAMMVALI. Residues 845 to 894 lie on the Cytoplasmic side of the membrane; that stretch reads EFCYKSRAESKRMKLTKNTQNFKPAPATNTQNYATYREGYNVYGTESVKI. The S-palmitoyl cysteine moiety is linked to residue cysteine 847. Phosphotyrosine occurs at positions 877 and 887.

The protein belongs to the glutamate-gated ion channel (TC 1.A.10.1) family. GRIA3 subfamily. Homotetramer or heterotetramer of pore-forming glutamate receptor subunits. Tetramers may be formed by the dimerization of dimers. Interacts with PICK1, GRIP1 and GRIP2. Found in a complex with GRIA1, GRIA2, GRIA4, CNIH2, CNIH3, CACNG2, CACNG3, CACNG4, CACNG5, CACNG7 and CACNG8. Interacts with CACNG5. Found in a complex with GRIA1, GRIA2, GRIA4, DLG4, CACNG8 and CNIH2.

The protein resides in the cell membrane. The protein localises to the postsynaptic cell membrane. Its subcellular location is the postsynaptic density membrane. It catalyses the reaction Ca(2+)(in) = Ca(2+)(out). Functionally, ionotropic glutamate receptor that functions as a ligand-gated cation channel, gated by L-glutamate and glutamatergic agonists such as alpha-amino-3-hydroxy-5-methyl-4-isoxazolepropionic acid (AMPA), quisqualic acid, and kainic acid. L-glutamate acts as an excitatory neurotransmitter at many synapses in the central nervous system and plays an important role in fast excitatory synaptic transmission by inducing long-term potentiation. Binding of the excitatory neurotransmitter L-glutamate induces a conformation change, leading to the opening of the cation channel, and thereby converts the chemical signal to an electrical impulse upon entry of calcium. The receptor then desensitizes rapidly and enters a transient inactive state, characterized by the presence of bound agonist. In the presence of CACNG8, shows resensitization which is characterized by a delayed accumulation of current flux upon continued application of glutamate. This is Glutamate receptor 3 from Macaca fascicularis (Crab-eating macaque).